Consider the following 69-residue polypeptide: Cytochrome c oxidase subunit 8A, mitochondrial (69 aa).

Residues 1–25 (MSVLTPLLLRGLTGPARRLPVPRAQ) constitute a mitochondrion transit peptide. Residues 2–19 (SVLTPLLLRGLTGPARRL) carry the SIFI-degron motif. At 26 to 36 (IHSKPPREQLG) the chain is on the mitochondrial matrix side. A helical membrane pass occupies residues 37–60 (TMDIAIGLTSCFLCFLLPSGWVLS). The Mitochondrial intermembrane segment spans residues 61-69 (HMENYKKRE).

It belongs to the cytochrome c oxidase VIII family. In terms of assembly, component of the cytochrome c oxidase (complex IV, CIV), a multisubunit enzyme composed of 14 subunits. The complex is composed of a catalytic core of 3 subunits MT-CO1, MT-CO2 and MT-CO3, encoded in the mitochondrial DNA, and 11 supernumerary subunits COX4I1 (or COX4I2), COX5A, COX5B, COX6A2 (or COX6A1), COX6B1 (or COX6B2), COX6C, COX7A1 (or COX7A2), COX7B, COX7C, COX8B and NDUFA4, which are encoded in the nuclear genome. The complex exists as a monomer or a dimer and forms supercomplexes (SCs) in the inner mitochondrial membrane with NADH-ubiquinone oxidoreductase (complex I, CI) and ubiquinol-cytochrome c oxidoreductase (cytochrome b-c1 complex, complex III, CIII), resulting in different assemblies (supercomplex SCI(1)III(2)IV(1) and megacomplex MCI(2)III(2)IV(2)). In terms of processing, in response to mitochondrial stress, the precursor protein is ubiquitinated by the SIFI complex in the cytoplasm before mitochondrial import, leading to its degradation. Within the SIFI complex, UBR4 initiates ubiquitin chain that are further elongated or branched by KCMF1.

The protein localises to the mitochondrion inner membrane. The protein operates within energy metabolism; oxidative phosphorylation. Functionally, component of the cytochrome c oxidase, the last enzyme in the mitochondrial electron transport chain which drives oxidative phosphorylation. The respiratory chain contains 3 multisubunit complexes succinate dehydrogenase (complex II, CII), ubiquinol-cytochrome c oxidoreductase (cytochrome b-c1 complex, complex III, CIII) and cytochrome c oxidase (complex IV, CIV), that cooperate to transfer electrons derived from NADH and succinate to molecular oxygen, creating an electrochemical gradient over the inner membrane that drives transmembrane transport and the ATP synthase. Cytochrome c oxidase is the component of the respiratory chain that catalyzes the reduction of oxygen to water. Electrons originating from reduced cytochrome c in the intermembrane space (IMS) are transferred via the dinuclear copper A center (CU(A)) of subunit 2 and heme A of subunit 1 to the active site in subunit 1, a binuclear center (BNC) formed by heme A3 and copper B (CU(B)). The BNC reduces molecular oxygen to 2 water molecules using 4 electrons from cytochrome c in the IMS and 4 protons from the mitochondrial matrix. This Bos taurus (Bovine) protein is Cytochrome c oxidase subunit 8A, mitochondrial (COX8A).